We begin with the raw amino-acid sequence, 387 residues long: Patatin group J-1 (387 aa).

Residues 1–23 (MATTKSFLILIVMILATTSSTFA) form the signal peptide. In terms of domain architecture, PNPLA spans 32 to 230 (LSIDGGGIKG…TVGDPALLSL (199 aa)). The GXGXXG motif lies at 36–41 (GGGIKG). The GXSXG motif lies at 75 to 79 (GTSTG). Serine 77 functions as the Nucleophile in the catalytic mechanism. Asparagine 115 carries an N-linked (GlcNAc...) asparagine glycan. Aspartate 216 serves as the catalytic Proton acceptor. Residues 216–218 (DGG) carry the DGA/G motif. Residues 322–385 (ENALTGTTTE…NRKKLRANKA (64 aa)) adopt a coiled-coil conformation.

The protein belongs to the patatin family. In terms of tissue distribution, tuber.

The protein localises to the vacuole. Its function is as follows. Probable lipolytic acyl hydrolase (LAH), an activity which is thought to be involved in the response of tubers to pathogens. This is Patatin group J-1 from Solanum tuberosum (Potato).